We begin with the raw amino-acid sequence, 96 residues long: Putative pterin-4-alpha-carbinolamine dehydratase (96 aa).

This sequence belongs to the pterin-4-alpha-carbinolamine dehydratase family.

It catalyses the reaction (4aS,6R)-4a-hydroxy-L-erythro-5,6,7,8-tetrahydrobiopterin = (6R)-L-erythro-6,7-dihydrobiopterin + H2O. In Paraburkholderia xenovorans (strain LB400), this protein is Putative pterin-4-alpha-carbinolamine dehydratase.